A 397-amino-acid chain; its full sequence is Putative gustatory receptor 85a (397 aa).

At 1 to 56 the chain is on the cytoplasmic side; it reads MYSLIEAQLLGGKLVNRVMASLRRIIQRSLGYFCALNGILDFNTDIGTGNLRRYRV. The chain crosses the membrane as a helical span at residues 57–77; the sequence is LFMYRLLHNFAVISLTLKFLF. Over 78-90 the chain is Extracellular; it reads DFTDHFKYIESST. The chain crosses the membrane as a helical span at residues 91–111; it reads LITVNFFTYFTLVFFALLSSM. Residues 112-151 are Cytoplasmic-facing; sequence GSCYQWQNRILAVLKELKHQRDLSRHMGYRVPRSKQNSID. The helical transmembrane segment at 152–172 threads the bilayer; it reads YLLFALTVLLILRLSIHLATF. Residues 173 to 186 are Extracellular-facing; that stretch reads TLSARMGFNHPCNC. Residues 187 to 207 form a helical membrane-spanning segment; sequence FLPECMIFSMNYLLFAILAEI. Over 208-268 the chain is Cytoplasmic; sequence TRCWWSLQSG…RYVTLAYMAR (61 aa). A helical membrane pass occupies residues 269 to 289; the sequence is NLWSGIVAGYLLVRFVIGNGL. At 290-293 the chain is on the extracellular side; sequence QDVE. The chain crosses the membrane as a helical span at residues 294–314; it reads LVYLVFSFITCIQPLMLSLLV. Residues 315 to 375 lie on the Cytoplasmic side of the membrane; sequence NSMTSTTGSL…FRINRSLAFR (61 aa). A helical membrane pass occupies residues 376-396; sequence SASLILVHVLYMVQSDYISIT. Asn-397 is a topological domain (extracellular).

This sequence belongs to the insect chemoreceptor superfamily. Gustatory receptor (GR) family. Gr22e subfamily.

The protein localises to the cell membrane. Probable gustatory receptor which mediates acceptance or avoidance behavior, depending on its substrates. The polypeptide is Putative gustatory receptor 85a (Gr85a) (Drosophila melanogaster (Fruit fly)).